The following is a 427-amino-acid chain: Retron Mx65 reverse transcriptase (427 aa).

Residues 136–366 (RHYSIHRPRE…GAQRVTGVTV (231 aa)) enclose the Reverse transcriptase domain. Mg(2+)-binding residues include Asp-219, Asp-315, and Asp-316.

This sequence belongs to the bacterial reverse transcriptase family.

It catalyses the reaction DNA(n) + a 2'-deoxyribonucleoside 5'-triphosphate = DNA(n+1) + diphosphate. Its function is as follows. Reverse transcriptase (RT) responsible for synthesis of msDNA-Mx65 (a branched molecule with RNA linked by a 2',5'-phosphodiester bond to ssDNA). The retron transcript serves as primer (from a conserved internal G residue) and template for the reaction, and codes for the RT. The retron is involved in antiviral defense. The chain is Retron Mx65 reverse transcriptase from Myxococcus xanthus.